Consider the following 55-residue polypeptide: uncharacterized protein (55 aa).

This is an uncharacterized protein from Rickettsia prowazekii (strain Madrid E).